A 246-amino-acid polypeptide reads, in one-letter code: Complement C1q tumor necrosis factor-related protein 3 (246 aa).

Residues 1-22 (MLWRQLIYWQLLALFFLPFCLC) form the signal peptide. Residues 51 to 113 (GYQGPPGPPG…KGEKGYPGIP (63 aa)) form the Collagen-like domain. The segment at 53-110 (QGPPGPPGPPGIPGNHGNNGNNGATGHEGAKGEKGDKGDLGPRGERGQHGPKGEKGYP) is disordered. The span at 55 to 64 (PPGPPGPPGI) shows a compositional bias: pro residues. Low complexity predominate over residues 65–74 (PGNHGNNGNN). Residue Asn70 is glycosylated (N-linked (GlcNAc...) asparagine). Positions 80–107 (EGAKGEKGDKGDLGPRGERGQHGPKGEK) are enriched in basic and acidic residues. A C1q domain is found at 113 to 246 (PPELQIAFMA…FAGFLLFETK (134 aa)).

Post-translationally, glycosylated on Asn-70. Expressed in colon and small intestine.

The protein localises to the secreted. The polypeptide is Complement C1q tumor necrosis factor-related protein 3 (C1QTNF3) (Homo sapiens (Human)).